Reading from the N-terminus, the 273-residue chain is Large ribosomal subunit protein uL2 (273 aa).

Residues 196–273 are disordered; that stretch reads GNSDHGLESS…SSKYIIERRK (78 aa). Composition is skewed to basic residues over residues 209–220 and 255–264; these read GRTRWMGRRPRN and LKTRAPKKQS.

This sequence belongs to the universal ribosomal protein uL2 family. Part of the 50S ribosomal subunit. Forms a bridge to the 30S subunit in the 70S ribosome.

One of the primary rRNA binding proteins. Required for association of the 30S and 50S subunits to form the 70S ribosome, for tRNA binding and peptide bond formation. It has been suggested to have peptidyltransferase activity; this is somewhat controversial. Makes several contacts with the 16S rRNA in the 70S ribosome. The polypeptide is Large ribosomal subunit protein uL2 (Phocaeicola vulgatus (strain ATCC 8482 / DSM 1447 / JCM 5826 / CCUG 4940 / NBRC 14291 / NCTC 11154) (Bacteroides vulgatus)).